We begin with the raw amino-acid sequence, 398 residues long: Probable aminomethyltransferase (398 aa).

The protein belongs to the GcvT family. In terms of assembly, the glycine cleavage system is composed of four proteins: P, T, L and H.

It carries out the reaction N(6)-[(R)-S(8)-aminomethyldihydrolipoyl]-L-lysyl-[protein] + (6S)-5,6,7,8-tetrahydrofolate = N(6)-[(R)-dihydrolipoyl]-L-lysyl-[protein] + (6R)-5,10-methylene-5,6,7,8-tetrahydrofolate + NH4(+). In terms of biological role, the glycine cleavage system catalyzes the degradation of glycine. The polypeptide is Probable aminomethyltransferase (Pyrococcus abyssi (strain GE5 / Orsay)).